The sequence spans 486 residues: Kynureninase 1 (486 aa).

The interval 53-72 is disordered; that stretch reads DLKRTTLDPNQEPEHSPTPS. Pyridoxal 5'-phosphate is bound by residues Leu146, Thr147, 174-177, Ser231, Asp260, His263, and Tyr285; that span reads FPSD. Lys286 bears the N6-(pyridoxal phosphate)lysine mark. Trp326 and Asn354 together coordinate pyridoxal 5'-phosphate.

Belongs to the kynureninase family. In terms of assembly, homodimer. The cofactor is pyridoxal 5'-phosphate.

The protein localises to the cytoplasm. The enzyme catalyses L-kynurenine + H2O = anthranilate + L-alanine + H(+). The catalysed reaction is 3-hydroxy-L-kynurenine + H2O = 3-hydroxyanthranilate + L-alanine + H(+). It functions in the pathway amino-acid degradation; L-kynurenine degradation; L-alanine and anthranilate from L-kynurenine: step 1/1. Its pathway is cofactor biosynthesis; NAD(+) biosynthesis; quinolinate from L-kynurenine: step 2/3. Its function is as follows. Catalyzes the cleavage of L-kynurenine (L-Kyn) and L-3-hydroxykynurenine (L-3OHKyn) into anthranilic acid (AA) and 3-hydroxyanthranilic acid (3-OHAA), respectively. The chain is Kynureninase 1 (bna5-1) from Aspergillus clavatus (strain ATCC 1007 / CBS 513.65 / DSM 816 / NCTC 3887 / NRRL 1 / QM 1276 / 107).